A 226-amino-acid polypeptide reads, in one-letter code: MTVEQKIIFFDLDNCLYPKSYKIHNMMAARITAFFSDKLGIPTEEAERLREVYYRHYGIAIRGLVLHHEIDAVDYDQRVDQSLPLEKVIKKDEVLREMLLELRKKYKCWIFTNAYIVHANRVLKYLGIEDCFDGITYCDYNAKDLIAKPMPEMYERVMREAGVTDKDKCIFVDDSYGNILGAREFGWKYTVQLVEHGDPLPQPQAGSHVIRDIHKFKHLLDEIDGE.

This sequence belongs to the SSM1 family.

This is an uncharacterized protein from Schizosaccharomyces pombe (strain 972 / ATCC 24843) (Fission yeast).